A 615-amino-acid chain; its full sequence is Delta-like protein B (615 aa).

The N-terminal stretch at 1–20 (MAHLSLYCLLSVSLLQLVAS) is a signal peptide. Residues 21 to 522 (SGVFELKVHS…VGQTSPSAVA (502 aa)) lie on the Extracellular side of the membrane. Positions 159–203 (VFCDEFYFGEACSDYCRPRDDTLGHYTCDENGNKECLVGWQGDYC) constitute a DSL domain. 26 cysteine pairs are disulfide-bonded: cysteine 161–cysteine 170, cysteine 174–cysteine 186, cysteine 194–cysteine 203, cysteine 208–cysteine 219, cysteine 212–cysteine 225, cysteine 227–cysteine 236, cysteine 245–cysteine 250, cysteine 258–cysteine 267, cysteine 274–cysteine 286, cysteine 280–cysteine 296, cysteine 298–cysteine 307, cysteine 314–cysteine 325, cysteine 319–cysteine 334, cysteine 336–cysteine 345, cysteine 352–cysteine 363, cysteine 357–cysteine 373, cysteine 375–cysteine 384, cysteine 391–cysteine 402, cysteine 396–cysteine 411, cysteine 413–cysteine 422, cysteine 429–cysteine 440, cysteine 434–cysteine 449, cysteine 451–cysteine 460, cysteine 467–cysteine 478, cysteine 472–cysteine 487, and cysteine 489–cysteine 498. EGF-like domains lie at 204 to 237 (SDPI…PSCS), 241 to 268 (HYPG…LFCN), and 270 to 308 (DLNY…TNCE). The region spanning 310 to 346 (EINECDCNPCKNGGSCNDLENDYSCTCPQGFYGKNCE) is the EGF-like 4; calcium-binding domain. EGF-like domains are found at residues 348–385 (IAMT…SNCE) and 387–423 (RLDR…SRCE). The region spanning 425 to 461 (NIDDCARYPCQNAGTCQDGINDYTCTCTLGFTGKNCS) is the EGF-like 7; calcium-binding domain. N-linked (GlcNAc...) asparagine glycosylation is present at asparagine 459. Residues 463-499 (RADACLTNPCLHGGTCFTHFSGPVCQCVPGFMGSTCE) form the EGF-like 8 domain. Residues 523 to 543 (VSCVLGVLAVFLGVCVGLVVL) traverse the membrane as a helical segment. Topologically, residues 544-615 (RRRRHRLRRQ…FLWSAGGGLR (72 aa)) are cytoplasmic.

In terms of processing, ubiquitinated by mib, leading to its endocytosis and subsequent degradation.

Its subcellular location is the membrane. In terms of biological role, acts as a ligand for Notch receptors and is involved in primary neurogenesis. Can activate Notch receptors, thereby playing a key role in lateral inhibition, a process that prevents the immediate neighbors of each nascent neural cell from simultaneously embarking on neural differentiation. This chain is Delta-like protein B (dlb), found in Danio rerio (Zebrafish).